The chain runs to 165 residues: Sulfopyruvate decarboxylase subunit alpha (165 aa).

The protein belongs to the ComD family. In terms of assembly, heterododecamer composed of 6 subunits alpha and 6 subunits beta.

It catalyses the reaction 3-sulfopyruvate + H(+) = sulfoacetaldehyde + CO2. The protein operates within cofactor biosynthesis; coenzyme M biosynthesis; sulfoacetaldehyde from phosphoenolpyruvate and sulfite: step 4/4. Its function is as follows. Involved in the biosynthesis of the coenzyme M (2-mercaptoethanesulfonic acid). Catalyzes the decarboxylation of sulfopyruvate to sulfoacetaldehyde. This Methanothermobacter thermautotrophicus (strain ATCC 29096 / DSM 1053 / JCM 10044 / NBRC 100330 / Delta H) (Methanobacterium thermoautotrophicum) protein is Sulfopyruvate decarboxylase subunit alpha.